A 658-amino-acid chain; its full sequence is Gametogenetin (658 aa).

Disordered regions lie at residues 1–268 and 285–584; these read MGNV…ASGG and KQGP…SNKG. The segment covering 14–30 has biased composition (basic and acidic residues); that stretch reads SRKEQASDRASDSRRTP. Over residues 54–83 the composition is skewed to low complexity; the sequence is PGSSGPPGLLIPPESQASSSTLPLTLELPS. The tract at residues 127-491 is interaction with GGNBP1; the sequence is RGLLEASHRG…APTPPSTLSP (365 aa). Pro residues predominate over residues 163–188; that stretch reads PAPPPTPLEPRKQLPPAPSTCDPQPP. A compositionally biased stretch (polar residues) spans 194-204; that stretch reads LASSATSPTES. Residues 252–264 are compositionally biased toward low complexity; sequence SSSGPLAAKASLG. Ser384 carries the phosphoserine modification. Over residues 398–409 the composition is skewed to low complexity; that stretch reads PRRPTPALLAPP. Residues 423-460 show a composition bias toward pro residues; it reads RPVPPSPQQIPPLPPPPPTPPATPPPAPPPTPQPPALP. Over residues 489-516 the composition is skewed to low complexity; that stretch reads LSPTAAAEQAPAPTPAPVTSQVPATTTA. Positions 496 to 658 are interactions with ZNF403/GGNBP2 and OAZ3; it reads EQAPAPTPAP…HYDLQATHST (163 aa). Basic residues predominate over residues 527–536; it reads IRTRRNKGPR.

As to quaternary structure, interacts with FANCL, GGNBP1 and ZNF403/GGNBP2.

Its function is as follows. May be involved in spermatogenesis. This is Gametogenetin (Ggn) from Rattus norvegicus (Rat).